The chain runs to 88 residues: UPF0297 protein Ccel_2240 (88 aa).

Belongs to the UPF0297 family.

The protein is UPF0297 protein Ccel_2240 of Ruminiclostridium cellulolyticum (strain ATCC 35319 / DSM 5812 / JCM 6584 / H10) (Clostridium cellulolyticum).